The following is a 347-amino-acid chain: Cytosolic sulfotransferase 14 (347 aa).

87 to 92 (KSGTTW) serves as a coordination point for 3'-phosphoadenylyl sulfate. The Proton acceptor role is filled by histidine 155. 3'-phosphoadenylyl sulfate contacts are provided by residues arginine 177, serine 185, tyrosine 244, and 310 to 312 (RKG).

Belongs to the sulfotransferase 1 family.

The protein resides in the cytoplasm. Functionally, sulfotransferase that utilizes 3'-phospho-5'-adenylyl sulfate (PAPS) as sulfonate donor. Not active with 11-hydroxyjasmonate or 12-hydroxyjasmonate. The protein is Cytosolic sulfotransferase 14 (SOT14) of Arabidopsis thaliana (Mouse-ear cress).